Here is a 72-residue protein sequence, read N- to C-terminus: Thiostrepton (72 aa).

A propeptide spanning residues 1–55 is cleaved from the precursor; it reads MDATAIHERWSVMSNASIGQEIGVEGLTGLDVDALEISDYVDETLLDGEDLTVTM. Residues 56–67 constitute a cross-link (4-(1-hydroxyethyl)-7-isoleucino-2-(threonin-O3-ylcarbonyl)-7,8-dihydroquinolin-8-ol (Ile-Thr)); that stretch reads IASASCTTCICT. Position 58 is a 2,3-didehydroalanine (Ser) (Ser58). The segment at residues 60–61 is a cross-link (thiazole-4-carboxylic acid (Ser-Cys)); that stretch reads SC. Positions 60 to 68 form a cross-link, 5-amino-piperideine-2,5-dicarboxylic acid (Ser-Cys) (with S-69); it reads SCTTCICTC. Residues 60–69 constitute a cross-link (5-amino-piperideine-2,5-dicarboxylic acid (Ser-Ser) (with C-68)); it reads SCTTCICTCS. Thr63 is modified ((Z)-2,3-didehydrobutyrine). The (4S)-thiazoline-4-carboxylic acid (Thr-Cys) cross-link spans 63-64; that stretch reads TC. Ile65 carries the post-translational modification (3S,4R)-3,4-dihydroxyisoleucine. The segment at residues 65-66 is a cross-link (thiazole-4-carboxylic acid (Ile-Cys)); that stretch reads IC. Residues 67–68 constitute a cross-link (thiazole-4-carboxylic acid (Thr-Cys)); that stretch reads TC. The segment at residues 69–70 is a cross-link (thiazole-4-carboxylic acid (Ser-Cys)); that stretch reads SC. 2,3-didehydroalanine (Ser) is present on residues Ser71 and Ser72. Position 72 is a serine amide (Ser72).

Belongs to the thiocillin family. In terms of processing, maturation of thiazole and oxazole containing antibiotics involves the enzymatic condensation of a Cys, Ser or Thr with the alpha-carbonyl of the preceding amino acid to form a thioether or ether bond, then dehydration to form a double bond with the alpha-amino nitrogen. Thiazoline or oxazoline ring are dehydrogenated to form thiazole or oxazole rings. Maturation of pyridinyl containing antibiotics involves the cross-linking of a Ser and a Cys-Ser pair usually separated by 7 or 8 residues along the peptide chain. The Ser residues are dehydrated to didehydroalanines, then bonded between their beta carbons. The alpha carbonyl of the Cys condenses with alpha carbon of the first Ser to form a pyridinyl ring. The ring may be multiply dehydrogenated to form a pyridine ring with loss of the amino nitrogen of the first Ser. Post-translationally, the amidation of Ser-72 probably does not occur by the same mechanism, oxidative cleavage of glycine, as in eukaryotes. In terms of processing, the structure of the 2,3-didehydrobutyrin is shown to be Z-isomer.

It is found in the secreted. Has bacteriocidal activity. Inhibits bacterial protein biosynthesis by acting on the elongation factor Tu (EF-Tu). This Streptomyces azureus protein is Thiostrepton (tpdA).